A 749-amino-acid polypeptide reads, in one-letter code: NAD(P)H-quinone oxidoreductase subunit 5, chloroplastic (749 aa).

Helical transmembrane passes span 9–29, 40–60, 89–109, 125–145, 147–167, 185–205, 221–241, 260–280, 285–305, 329–349, 356–376, 398–418, 427–447, 553–573, 607–627, and 727–747; these read WIIP…LLLF, WSFT…NLSI, IDPL…MVLI, FAYM…SNLI, IYIF…FWFT, GDFG…SFEF, NGTN…GAVA, TPIS…FLVA, LFIV…ITIL, LGYT…FHLI, ALLF…VGYS, NTFL…CFWS, WLYS…TAFY, LFPL…GIPF, FVIN…LASL, and SYLF…YFFL.

The protein belongs to the complex I subunit 5 family. In terms of assembly, NDH is composed of at least 16 different subunits, 5 of which are encoded in the nucleus.

It is found in the plastid. The protein resides in the chloroplast thylakoid membrane. It carries out the reaction a plastoquinone + NADH + (n+1) H(+)(in) = a plastoquinol + NAD(+) + n H(+)(out). The enzyme catalyses a plastoquinone + NADPH + (n+1) H(+)(in) = a plastoquinol + NADP(+) + n H(+)(out). Functionally, NDH shuttles electrons from NAD(P)H:plastoquinone, via FMN and iron-sulfur (Fe-S) centers, to quinones in the photosynthetic chain and possibly in a chloroplast respiratory chain. The immediate electron acceptor for the enzyme in this species is believed to be plastoquinone. Couples the redox reaction to proton translocation, and thus conserves the redox energy in a proton gradient. This Vitis vinifera (Grape) protein is NAD(P)H-quinone oxidoreductase subunit 5, chloroplastic (ndhF).